Consider the following 556-residue polypeptide: Oxygen-dependent choline dehydrogenase (556 aa).

4-33 (DYIIIGAGSAGNVLATRLTEDPNTTVLLLE) is a binding site for FAD. H473 acts as the Proton acceptor in catalysis.

Belongs to the GMC oxidoreductase family. It depends on FAD as a cofactor.

The enzyme catalyses choline + A = betaine aldehyde + AH2. The catalysed reaction is betaine aldehyde + NAD(+) + H2O = glycine betaine + NADH + 2 H(+). It functions in the pathway amine and polyamine biosynthesis; betaine biosynthesis via choline pathway; betaine aldehyde from choline (cytochrome c reductase route): step 1/1. Its function is as follows. Involved in the biosynthesis of the osmoprotectant glycine betaine. Catalyzes the oxidation of choline to betaine aldehyde and betaine aldehyde to glycine betaine at the same rate. The chain is Oxygen-dependent choline dehydrogenase from Escherichia coli O17:K52:H18 (strain UMN026 / ExPEC).